A 258-amino-acid chain; its full sequence is 4-hydroxy-tetrahydrodipicolinate reductase (258 aa).

NAD(+)-binding positions include 8-13, 93-95, and 117-120; these read GVTGRM, GTT, and AANF. Histidine 149 acts as the Proton donor/acceptor in catalysis. Histidine 150 provides a ligand contact to (S)-2,3,4,5-tetrahydrodipicolinate. Lysine 153 (proton donor) is an active-site residue. 159–160 serves as a coordination point for (S)-2,3,4,5-tetrahydrodipicolinate; that stretch reads GT.

It belongs to the DapB family.

The protein localises to the cytoplasm. It carries out the reaction (S)-2,3,4,5-tetrahydrodipicolinate + NAD(+) + H2O = (2S,4S)-4-hydroxy-2,3,4,5-tetrahydrodipicolinate + NADH + H(+). The enzyme catalyses (S)-2,3,4,5-tetrahydrodipicolinate + NADP(+) + H2O = (2S,4S)-4-hydroxy-2,3,4,5-tetrahydrodipicolinate + NADPH + H(+). It participates in amino-acid biosynthesis; L-lysine biosynthesis via DAP pathway; (S)-tetrahydrodipicolinate from L-aspartate: step 4/4. In terms of biological role, catalyzes the conversion of 4-hydroxy-tetrahydrodipicolinate (HTPA) to tetrahydrodipicolinate. The protein is 4-hydroxy-tetrahydrodipicolinate reductase of Thermomicrobium roseum (strain ATCC 27502 / DSM 5159 / P-2).